We begin with the raw amino-acid sequence, 147 residues long: UPF0179 protein NP_3406A (147 aa).

The protein belongs to the UPF0179 family.

In Natronomonas pharaonis (strain ATCC 35678 / DSM 2160 / CIP 103997 / JCM 8858 / NBRC 14720 / NCIMB 2260 / Gabara) (Halobacterium pharaonis), this protein is UPF0179 protein NP_3406A.